The sequence spans 145 residues: D-aminoacyl-tRNA deacylase (145 aa).

Positions 137–138 (GP) match the Gly-cisPro motif, important for rejection of L-amino acids motif.

It belongs to the DTD family. As to quaternary structure, homodimer.

The protein resides in the cytoplasm. The catalysed reaction is glycyl-tRNA(Ala) + H2O = tRNA(Ala) + glycine + H(+). It catalyses the reaction a D-aminoacyl-tRNA + H2O = a tRNA + a D-alpha-amino acid + H(+). Functionally, an aminoacyl-tRNA editing enzyme that deacylates mischarged D-aminoacyl-tRNAs. Also deacylates mischarged glycyl-tRNA(Ala), protecting cells against glycine mischarging by AlaRS. Acts via tRNA-based rather than protein-based catalysis; rejects L-amino acids rather than detecting D-amino acids in the active site. By recycling D-aminoacyl-tRNA to D-amino acids and free tRNA molecules, this enzyme counteracts the toxicity associated with the formation of D-aminoacyl-tRNA entities in vivo and helps enforce protein L-homochirality. This is D-aminoacyl-tRNA deacylase from Chromohalobacter salexigens (strain ATCC BAA-138 / DSM 3043 / CIP 106854 / NCIMB 13768 / 1H11).